Reading from the N-terminus, the 351-residue chain is Minor outer capsid protein P9 (351 aa).

The segment at 246 to 308 is disordered; that stretch reads GVPAALPQPD…KAVPSGNVSA (63 aa). Basic and acidic residues predominate over residues 285–297; that stretch reads MIRKKVETSKDAP.

It belongs to the phytoreovirus minor outer capsid protein P9 family.

Its subcellular location is the virion. The protein localises to the host cytoplasm. In terms of biological role, minor outer capsid protein. This Rice dwarf virus (isolate O) (RDV) protein is Minor outer capsid protein P9.